The following is a 413-amino-acid chain: Phosphoglycerate kinase (413 aa).

Substrate-binding positions include 19–21 (DLN), Arg-34, 57–60 (HQSK), Arg-114, and Arg-154. ATP is bound by residues Glu-332 and 358-361 (GGHS).

This sequence belongs to the phosphoglycerate kinase family. In terms of assembly, monomer.

The protein resides in the cytoplasm. The enzyme catalyses (2R)-3-phosphoglycerate + ATP = (2R)-3-phospho-glyceroyl phosphate + ADP. The protein operates within carbohydrate degradation; glycolysis; pyruvate from D-glyceraldehyde 3-phosphate: step 2/5. This Thermococcus sibiricus (strain DSM 12597 / MM 739) protein is Phosphoglycerate kinase.